Reading from the N-terminus, the 505-residue chain is 4-alpha-glucanotransferase (505 aa).

Belongs to the disproportionating enzyme family.

The protein resides in the cytoplasm. The catalysed reaction is Transfers a segment of a (1-&gt;4)-alpha-D-glucan to a new position in an acceptor, which may be glucose or a (1-&gt;4)-alpha-D-glucan.. This chain is 4-alpha-glucanotransferase (malQ), found in Streptococcus pneumoniae serotype 4 (strain ATCC BAA-334 / TIGR4).